We begin with the raw amino-acid sequence, 1358 residues long: DNA-directed RNA polymerase subunit beta (1358 aa).

The span at Gln1033–Gly1051 shows a compositional bias: basic and acidic residues. The interval Gln1033–Leu1053 is disordered.

The protein belongs to the RNA polymerase beta chain family. In terms of assembly, the RNAP catalytic core consists of 2 alpha, 1 beta, 1 beta' and 1 omega subunit. When a sigma factor is associated with the core the holoenzyme is formed, which can initiate transcription.

It carries out the reaction RNA(n) + a ribonucleoside 5'-triphosphate = RNA(n+1) + diphosphate. Functionally, DNA-dependent RNA polymerase catalyzes the transcription of DNA into RNA using the four ribonucleoside triphosphates as substrates. This chain is DNA-directed RNA polymerase subunit beta, found in Marinobacter nauticus (strain ATCC 700491 / DSM 11845 / VT8) (Marinobacter aquaeolei).